We begin with the raw amino-acid sequence, 445 residues long: Phenylacetate-coenzyme A ligase (445 aa).

Belongs to the phenylacetyl-CoA ligase family. As to quaternary structure, monomer.

The enzyme catalyses 2-phenylacetate + ATP + CoA = phenylacetyl-CoA + AMP + diphosphate. Its pathway is aromatic compound metabolism; phenylacetate degradation. Functionally, catalyzes the activation of phenylacetic acid (PA) to phenylacetyl-CoA (PA-CoA). Involved in the phenylalanine metabolism. This is Phenylacetate-coenzyme A ligase from Thermus thermophilus (strain ATCC BAA-163 / DSM 7039 / HB27).